The chain runs to 584 residues: Protein FAM117B (584 aa).

The tract at residues 1–214 is disordered; it reads MSQRVRRNGS…SSSSSIIRRT (214 aa). Serine 10 is subject to Phosphoserine. Residues 53-79 show a composition bias toward gly residues; that stretch reads TRGGGGGGNNGGNGGASGPSGGGGSGG. Residues 80–90 are compositionally biased toward low complexity; sequence PRTASRSTSPT. Phosphoserine is present on serine 102. The span at 114-132 shows a compositional bias: low complexity; the sequence is TSTRGTSPTRGTAPGARSS. Residues 133-142 are compositionally biased toward pro residues; it reads PPRPQPPPPL. Residues 145–154 are compositionally biased toward polar residues; the sequence is TVSSPSSSPT. Over residues 204–214 the composition is skewed to low complexity; the sequence is SSSSSSIIRRT. 4 positions are modified to phosphoserine: serine 206, serine 215, serine 216, and serine 268. 2 disordered regions span residues 227–461 and 551–584; these read GHWP…SYMF and STNT…EAEG. A compositionally biased stretch (basic residues) spans 287–297; the sequence is RSKHSSRHHRD. Serine 340 carries the post-translational modification Phosphoserine. The span at 350-361 shows a compositional bias: basic and acidic residues; that stretch reads IIIKETGEKEEQ. Over residues 379–392 the composition is skewed to polar residues; it reads QRSSSTRSIDTQTP. Phosphoserine is present on serine 386. A compositionally biased stretch (low complexity) spans 399-412; the sequence is SNNSSRSQSVSPTS. Phosphoserine occurs at positions 444 and 452.

This is Protein FAM117B (Fam117b) from Mus musculus (Mouse).